We begin with the raw amino-acid sequence, 28 residues long: Trypsin inhibitor 2 (28 aa).

Intrachain disulfides connect Cys3–Cys20, Cys10–Cys22, and Cys16–Cys27.

The protein belongs to the protease inhibitor I7 (squash-type serine protease inhibitor) family.

It is found in the secreted. In terms of biological role, inhibits trypsin. In Momordica charantia (Bitter gourd), this protein is Trypsin inhibitor 2.